Consider the following 302-residue polypeptide: Oxygen-dependent coproporphyrinogen-III oxidase (302 aa).

Ser94 contributes to the substrate binding site. A divalent metal cation is bound by residues His98 and His108. His108 functions as the Proton donor in the catalytic mechanism. Substrate is bound at residue 110 to 112 (NVR). A divalent metal cation is bound by residues His147 and His177. The interval 242 to 277 (YVEFNLVFDRGTLFGLQSGGRAESILMSMPPVANWR) is important for dimerization. 260–262 (GGR) provides a ligand contact to substrate.

Belongs to the aerobic coproporphyrinogen-III oxidase family. As to quaternary structure, homodimer. It depends on a divalent metal cation as a cofactor.

Its subcellular location is the cytoplasm. It carries out the reaction coproporphyrinogen III + O2 + 2 H(+) = protoporphyrinogen IX + 2 CO2 + 2 H2O. It participates in porphyrin-containing compound metabolism; protoporphyrin-IX biosynthesis; protoporphyrinogen-IX from coproporphyrinogen-III (O2 route): step 1/1. Its function is as follows. Involved in the heme biosynthesis. Catalyzes the aerobic oxidative decarboxylation of propionate groups of rings A and B of coproporphyrinogen-III to yield the vinyl groups in protoporphyrinogen-IX. This Ralstonia pickettii (strain 12J) protein is Oxygen-dependent coproporphyrinogen-III oxidase.